The sequence spans 527 residues: Low-affinity Na(+)/H(+) antiporter NhaS1 (527 aa).

The next 11 membrane-spanning stretches (helical) occupy residues 18–38, 41–61, 94–114, 126–146, 169–189, 196–216, 240–260, 276–296, 311–331, 352–372, and 380–400; these read FLIVLSVSLSIATLSKTVPIL, IPYTLLLVIVGMALAFVDVKL, WFPITLFATLGVVICVVGIAF, IAFLAAAALSATDPVSVIALF, VAVVVFLILVGIPLGTSTFDL, FVTVIGIGVGCGLVIGFSLSL, ILAENLGGSGVIGVVVVGMVL, IVSIFWEFVAFFVNSIIFLLI, LILIAIAAVVVTRLVSVFGLS, TVLWWGGLRGSVAIAVALSVP, and AIIDIVFGVVLFTLLVQGLTT.

This sequence belongs to the monovalent cation:proton antiporter 1 (CPA1) transporter (TC 2.A.36) family.

The protein resides in the cell membrane. Its function is as follows. Na(+)/H(+) antiporter that extrudes sodium in exchange for external protons. Might be able to function at relatively high concentrations of Na(+) ions. Also has Li(+)/H(+) antiport activity under K(+)-rich conditions, but it might not have any physiological relevance. This is Low-affinity Na(+)/H(+) antiporter NhaS1 (nhaS1) from Synechocystis sp. (strain ATCC 27184 / PCC 6803 / Kazusa).